Reading from the N-terminus, the 624-residue chain is MNNIEATLFLCFFCIFSSSNVHFAGAKQTAGNITPSENPFTPKASLIRYWNNHINGDSPKPSFFLSKASPLTAVDSTRFASLASNHALNTHHSDFCSAAKLFCFPELAAHSLEKHGDDVNFAAYSGKNFTNYGSDRLSGADSFKNYSGGDNIAVDSFRRYSRNSAGHDDGFTNYAGEVNVADQSFTTYATGTTGGSGEFTNYNTDANEPNGRFTSYSDKANGRSQTFTTYSENGNTGYQSFTSYSKNGNGAPNEFSGYGTGSNVVNTGFTKYGESANGANDSFTSYGENGNVPVNEFKGYGDGGNGAVYGFKNYRDQSNIGVDSFSSYAKNSNNEKVNFVNYGKSFNLGSDNFTGYGQDNVGGNVSFKTYGQGQSFKVYTKDGVVFARYSNNVSSNGKTVNKWVEEGKFFREAMLKEGTLMQMPDIKDKMPKRTFLPRNIVKNLPFSSSTIGEIWRVFGAGENSSMAGIISSAVSECERPASHGETKRCVGSAEDMIDFATSVLGRGVVVRTTENVVGSKKKVVIGKVNGINGGDVTRAVSCHQSLYPYLLYYCHSVPRVRVYETDLLDPKSLEKINHGVAICHIDTSAWSPSHGAFLALGSGPGQIEVCHWIFENDMTWNIID.

Positions 1–26 (MNNIEATLFLCFFCIFSSSNVHFAGA) are cleaved as a signal peptide. The stretch at 121–124 (FAAY) is one FXXY 1 repeat. Asn-128 carries an N-linked (GlcNAc...) asparagine glycan. FXXY repeat units lie at residues 129-132 (FTNY), 143-146 (FKNY), 157-160 (FRRY), 171-174 (FTNY), 185-188 (FTTY), 199-202 (FTNY), 213-216 (FTSY), 227-230 (FTTY), 241-244 (FTSY), 255-258 (FSGY), and 269-272 (FTKY). N-linked (GlcNAc...) asparagine glycosylation occurs at Asn-145. A disordered region spans residues 199 to 219 (FTNYNTDANEPNGRFTSYSDK). Asn-280 carries N-linked (GlcNAc...) asparagine glycosylation. FXXY repeat units follow at residues 283–286 (FTSY), 297–300 (FKGY), 311–314 (FKNY), 325–328 (FSSY), and 339–342 (FVNY). N-linked (GlcNAc...) asparagine glycosylation occurs at Asn-352. An FXXY 18 repeat occupies 353–356 (FTGY). An N-linked (GlcNAc...) asparagine glycan is attached at Asn-364. FXXY repeat units follow at residues 367–370 (FKTY), 376–379 (FKVY), and 386–389 (FARY). N-linked (GlcNAc...) asparagine glycosylation is found at Asn-392 and Asn-463. Positions 409-623 (FFREAMLKEG…FENDMTWNII (215 aa)) constitute a BURP domain.

In terms of tissue distribution, expressed in flowers and stems.

Its subcellular location is the secreted. It is found in the extracellular space. The protein localises to the apoplast. It localises to the cell wall. Involved in cell size determination. The chain is Polygalacturonase 1 beta-like protein 2 from Arabidopsis thaliana (Mouse-ear cress).